Reading from the N-terminus, the 591-residue chain is V-type ATP synthase alpha chain (591 aa).

Residue glycine 233–threonine 240 coordinates ATP.

It belongs to the ATPase alpha/beta chains family.

It carries out the reaction ATP + H2O + 4 H(+)(in) = ADP + phosphate + 5 H(+)(out). Produces ATP from ADP in the presence of a proton gradient across the membrane. The V-type alpha chain is a catalytic subunit. This is V-type ATP synthase alpha chain from Streptococcus pyogenes serotype M12 (strain MGAS2096).